A 146-amino-acid polypeptide reads, in one-letter code: Putative transposon Ty5-1 protein YCL075W (146 aa).

In Saccharomyces cerevisiae (strain ATCC 204508 / S288c) (Baker's yeast), this protein is Putative transposon Ty5-1 protein YCL075W (TY5B).